We begin with the raw amino-acid sequence, 227 residues long: Cytidylate kinase (227 aa).

10–18 contacts ATP; it reads GPASSGKST.

The protein belongs to the cytidylate kinase family. Type 1 subfamily.

The protein localises to the cytoplasm. The enzyme catalyses CMP + ATP = CDP + ADP. The catalysed reaction is dCMP + ATP = dCDP + ADP. The polypeptide is Cytidylate kinase (Streptococcus agalactiae serotype Ia (strain ATCC 27591 / A909 / CDC SS700)).